The following is a 144-amino-acid chain: 3-hydroxyacyl-[acyl-carrier-protein] dehydratase FabZ (144 aa).

H47 is an active-site residue.

Belongs to the thioester dehydratase family. FabZ subfamily.

The protein resides in the cytoplasm. It catalyses the reaction a (3R)-hydroxyacyl-[ACP] = a (2E)-enoyl-[ACP] + H2O. In terms of biological role, involved in unsaturated fatty acids biosynthesis. Catalyzes the dehydration of short chain beta-hydroxyacyl-ACPs and long chain saturated and unsaturated beta-hydroxyacyl-ACPs. In Dechloromonas aromatica (strain RCB), this protein is 3-hydroxyacyl-[acyl-carrier-protein] dehydratase FabZ.